The chain runs to 380 residues: Chaperone protein DnaJ (380 aa).

One can recognise a J domain in the interval 6-71; it reads DYYESLEVSR…QKRAAYDRYG (66 aa). A CR-type zinc finger spans residues 136–215; the sequence is GVTKDVEVRT…CHGTGTEAKT (80 aa). Positions 149, 152, 167, 170, 189, 192, 203, and 206 each coordinate Zn(2+). 4 CXXCXGXG motif repeats span residues 149-156, 167-174, 189-196, and 203-210; these read CEACHGSG, CPTCHGAG, CPTCHGSG, and CKVCHGTG.

This sequence belongs to the DnaJ family. As to quaternary structure, homodimer. It depends on Zn(2+) as a cofactor.

The protein localises to the cytoplasm. Functionally, participates actively in the response to hyperosmotic and heat shock by preventing the aggregation of stress-denatured proteins and by disaggregating proteins, also in an autonomous, DnaK-independent fashion. Unfolded proteins bind initially to DnaJ; upon interaction with the DnaJ-bound protein, DnaK hydrolyzes its bound ATP, resulting in the formation of a stable complex. GrpE releases ADP from DnaK; ATP binding to DnaK triggers the release of the substrate protein, thus completing the reaction cycle. Several rounds of ATP-dependent interactions between DnaJ, DnaK and GrpE are required for fully efficient folding. Also involved, together with DnaK and GrpE, in the DNA replication of plasmids through activation of initiation proteins. This Gluconobacter oxydans (strain 621H) (Gluconobacter suboxydans) protein is Chaperone protein DnaJ.